The following is a 146-amino-acid chain: uncharacterized protein (146 aa).

Transmembrane regions (helical) follow at residues 89-111 (AIEMVGKVLILVPLLASLVLLLY) and 121-143 (IGCGFCLGTVILAGIVLVGYSVV).

It is found in the cell membrane. This is an uncharacterized protein from Archaeoglobus fulgidus (strain ATCC 49558 / DSM 4304 / JCM 9628 / NBRC 100126 / VC-16).